The following is a 439-amino-acid chain: Protein ABHD8 (439 aa).

Disordered regions lie at residues 49–70 (AGPAPAAAPPPPSSASSDAAQG) and 124–156 (PAGSDGRLAPGSAGSGSGSGSGGRRRRARRPKR). Over residues 136 to 145 (AGSGSGSGSG) the composition is skewed to gly residues. Residues 146–156 (GRRRRARRPKR) are compositionally biased toward basic residues. Positions 177 to 279 (VLFFIHGVGG…HKVIMINGGG (103 aa)) constitute an AB hydrolase-1 domain. Residues serine 252, aspartate 370, and histidine 398 each act as charge relay system in the active site.

This sequence belongs to the AB hydrolase superfamily. Interacts with NLRP3 (via NACHT and LLR domains); this interaction is enhanced in the presence of NLRP3 inflammasome inducers, such as ATP, nigericin, silica, or alum. Interacts with ZDHHC12. In terms of assembly, (Microbial infection) Interacts with SARS-CoV-2 nucleoprotein N; this interaction disrupts the NLRP3-ABHD8 association, enhancing NLRP3 stability, ultimately leading to increased inflammasome activation.

It localises to the cytoplasm. Functionally, negatively regulates NLRP3-driven inflammation. Promotes NLRP3 degradation through the chaperone-mediated autophagy (CMA) pathway, hence attenuating inflammasome activation and IL1B secretion. Acts by recruiting palmitoyltransferase ZDHHC12 to NLRP3, facilitating NLRP3 palmitoylation and subsequent degradation. The protein is Protein ABHD8 of Homo sapiens (Human).